The sequence spans 398 residues: Acetate kinase (398 aa).

N10 serves as a coordination point for Mg(2+). Residue K17 coordinates ATP. R91 contacts substrate. Residue D148 is the Proton donor/acceptor of the active site. ATP contacts are provided by residues 208-212 (HLGNG), 283-285 (DCR), and 331-335 (GIGEN). A Mg(2+)-binding site is contributed by E385.

The protein belongs to the acetokinase family. In terms of assembly, homodimer. Mg(2+) is required as a cofactor. Requires Mn(2+) as cofactor.

The protein localises to the cytoplasm. The catalysed reaction is acetate + ATP = acetyl phosphate + ADP. Its pathway is metabolic intermediate biosynthesis; acetyl-CoA biosynthesis; acetyl-CoA from acetate: step 1/2. In terms of biological role, catalyzes the formation of acetyl phosphate from acetate and ATP. Can also catalyze the reverse reaction. This is Acetate kinase from Shewanella loihica (strain ATCC BAA-1088 / PV-4).